A 271-amino-acid chain; its full sequence is MVATVVNVQVKNEEKIETAPKKVVFDTKNLNLWYGEDHALKDINLSIHENEVTAIIGPSGCGKSTYLKTLNRMVELVPIVRTTGVIEYRERNIFDKSYPVEELRTHVGMVFQKPNPFPKSIYENVAYGPKIHGISDKKTLDEIVEKSLRGAAIWDELKDRLHDNAYGLSGGQQQRLCIARCLAIEPDVILMDEPTSALDPISTLKVEELIQELKKDFSIVIVTHNMQQAARISDKTAFFLSGEVVEYTDTNKLFTTPSDKRTEDYITGRFG.

The ABC transporter domain maps to 25-266; sequence FDTKNLNLWY…PSDKRTEDYI (242 aa). 57–64 contributes to the ATP binding site; that stretch reads GPSGCGKS.

Belongs to the ABC transporter superfamily. Phosphate importer (TC 3.A.1.7) family. In terms of assembly, the complex is composed of two ATP-binding proteins (PstB), two transmembrane proteins (PstC and PstA) and a solute-binding protein (PstS).

The protein resides in the cell membrane. It catalyses the reaction phosphate(out) + ATP + H2O = ADP + 2 phosphate(in) + H(+). In terms of biological role, part of the ABC transporter complex PstSACB involved in phosphate import. Responsible for energy coupling to the transport system. The protein is Phosphate import ATP-binding protein PstB of Bacillus anthracis.